We begin with the raw amino-acid sequence, 130 residues long: Fluoride-specific ion channel FluC (130 aa).

The next 4 membrane-spanning stretches (helical) occupy residues 7–27 (VLAI…LGLW), 36–56 (LGTL…VAVF), 69–89 (ALIT…AEVV), and 99–119 (LGFG…LAGI). Na(+) is bound by residues glycine 76 and threonine 79.

It belongs to the fluoride channel Fluc/FEX (TC 1.A.43) family.

Its subcellular location is the cell inner membrane. It catalyses the reaction fluoride(in) = fluoride(out). Its activity is regulated as follows. Na(+) is not transported, but it plays an essential structural role and its presence is essential for fluoride channel function. Its function is as follows. Fluoride-specific ion channel. Important for reducing fluoride concentration in the cell, thus reducing its toxicity. The chain is Fluoride-specific ion channel FluC from Albidiferax ferrireducens (strain ATCC BAA-621 / DSM 15236 / T118) (Rhodoferax ferrireducens).